The primary structure comprises 788 residues: Ribosome biogenesis protein ERB1 (788 aa).

The tract at residues methionine 1 to proline 91 is disordered. Residues leucine 38–aspartate 50 are compositionally biased toward basic and acidic residues. Positions serine 51–serine 78 are enriched in acidic residues. The segment covering isoleucine 80–proline 91 has biased composition (basic and acidic residues). WD repeat units lie at residues glycine 433 to serine 472, serine 476 to glutamate 516, lysine 613 to isoleucine 651, proline 654 to lysine 699, tyrosine 703 to serine 742, and threonine 758 to threonine 788.

Belongs to the WD repeat BOP1/ERB1 family. As to quaternary structure, component of the NOP7 complex, composed of ERB1, NOP7 and YTM1. The complex is held together by ERB1, which interacts with NOP7 via its N-terminal domain and with YTM1 via a high-affinity interaction between the seven-bladed beta-propeller domains of the 2 proteins. The NOP7 complex associates with the 66S pre-ribosome.

It localises to the nucleus. Its subcellular location is the nucleolus. It is found in the nucleoplasm. In terms of biological role, component of the NOP7 complex, which is required for maturation of the 25S and 5.8S ribosomal RNAs and formation of the 60S ribosome. This is Ribosome biogenesis protein ERB1 from Ajellomyces capsulatus (strain NAm1 / WU24) (Darling's disease fungus).